Reading from the N-terminus, the 90-residue chain is Progonadoliberin-1 (90 aa).

A signal peptide spans 1–24 (MSRHVTVVLLLAIVLLLSSHMIHG). Gln25 is modified (pyrrolidone carboxylic acid). Gly34 bears the Glycine amide mark.

The protein belongs to the GnRH family. As to expression, forebrain.

It is found in the secreted. In terms of biological role, stimulates the secretion of gonadotropins. This chain is Progonadoliberin-1 (gnrh1), found in Aquarana catesbeiana (American bullfrog).